A 332-amino-acid polypeptide reads, in one-letter code: 4-hydroxy-3-methylbut-2-enyl diphosphate reductase (332 aa).

Cysteine 34 is a [4Fe-4S] cluster binding site. Positions 63 and 96 each coordinate (2E)-4-hydroxy-3-methylbut-2-enyl diphosphate. Histidine 63 and histidine 96 together coordinate dimethylallyl diphosphate. The isopentenyl diphosphate site is built by histidine 63 and histidine 96. Cysteine 118 contributes to the [4Fe-4S] cluster binding site. Histidine 146 lines the (2E)-4-hydroxy-3-methylbut-2-enyl diphosphate pocket. Histidine 146 is a binding site for dimethylallyl diphosphate. Residue histidine 146 participates in isopentenyl diphosphate binding. The Proton donor role is filled by glutamate 148. Position 186 (threonine 186) interacts with (2E)-4-hydroxy-3-methylbut-2-enyl diphosphate. Residue cysteine 216 participates in [4Fe-4S] cluster binding. The (2E)-4-hydroxy-3-methylbut-2-enyl diphosphate site is built by serine 244, serine 245, asparagine 246, and serine 289. Residues serine 244, serine 245, asparagine 246, and serine 289 each contribute to the dimethylallyl diphosphate site. Residues serine 244, serine 245, asparagine 246, and serine 289 each contribute to the isopentenyl diphosphate site.

This sequence belongs to the IspH family. The cofactor is [4Fe-4S] cluster.

The catalysed reaction is isopentenyl diphosphate + 2 oxidized [2Fe-2S]-[ferredoxin] + H2O = (2E)-4-hydroxy-3-methylbut-2-enyl diphosphate + 2 reduced [2Fe-2S]-[ferredoxin] + 2 H(+). It catalyses the reaction dimethylallyl diphosphate + 2 oxidized [2Fe-2S]-[ferredoxin] + H2O = (2E)-4-hydroxy-3-methylbut-2-enyl diphosphate + 2 reduced [2Fe-2S]-[ferredoxin] + 2 H(+). It functions in the pathway isoprenoid biosynthesis; dimethylallyl diphosphate biosynthesis; dimethylallyl diphosphate from (2E)-4-hydroxy-3-methylbutenyl diphosphate: step 1/1. The protein operates within isoprenoid biosynthesis; isopentenyl diphosphate biosynthesis via DXP pathway; isopentenyl diphosphate from 1-deoxy-D-xylulose 5-phosphate: step 6/6. Functionally, catalyzes the conversion of 1-hydroxy-2-methyl-2-(E)-butenyl 4-diphosphate (HMBPP) into a mixture of isopentenyl diphosphate (IPP) and dimethylallyl diphosphate (DMAPP). Acts in the terminal step of the DOXP/MEP pathway for isoprenoid precursor biosynthesis. The sequence is that of 4-hydroxy-3-methylbut-2-enyl diphosphate reductase from Mycolicibacterium paratuberculosis (strain ATCC BAA-968 / K-10) (Mycobacterium paratuberculosis).